The following is a 447-amino-acid chain: Acyl-lipid (7-3)-desaturase (447 aa).

The 59-residue stretch at 36 to 94 folds into the Cytochrome b5 heme-binding domain; the sequence is LTIVGDSVYDAKAFRSEHPGGAHFVSLFGGRDATEAFMEYHRRAWPKSRMSRFHVGSLA. Positions 53 and 76 each coordinate heme. 3 helical membrane passes run 123 to 143, 154 to 174, and 185 to 205; these read GFAP…AIAL, LLPS…IQHD, and SVNL…ILWL. The short motif at 173–177 is the Histidine box-1 element; that stretch reads HDANH. The Histidine box-2 motif lies at 208-213; the sequence is HVVMHH. The next 3 membrane-spanning stretches (helical) occupy residues 244–264, 286–306, and 315–335; these read WLQH…LLFL, LFMP…ALPL, and AVCI…FFFI. The Histidine box-3 motif lies at 386 to 390; sequence QIEHH.

The protein belongs to the fatty acid desaturase type 1 family. Requires Fe(2+) as cofactor.

Its subcellular location is the membrane. The catalysed reaction is a (7Z,10Z,13Z,16Z,19Z)-docosapentaenoyl-containing glycerolipid + 2 Fe(II)-[cytochrome b5] + O2 + 2 H(+) = a (4Z,7Z,10Z,13Z,16Z,19Z)-docosahexaenoyl-containing glycerolipid + 2 Fe(III)-[cytochrome b5] + 2 H2O. The enzyme catalyses a (7Z,10Z,13Z,16Z)-docosatetraenoyl-containing glycerolipid + 2 Fe(II)-[cytochrome b5] + O2 + 2 H(+) = a (4Z,7Z,10Z,13Z,16Z)-docosapentaenoyl-containing glycerolipid + 2 Fe(III)-[cytochrome b5] + 2 H2O. Fatty acid desaturase that introduces a cis double bond at the 4-position in 22-carbon polyunsaturated fatty acids that contain a Delta(7) double bond, resulting in the production of delta-4 desaturated fatty acid docosahexanoic acid (DHA). This is Acyl-lipid (7-3)-desaturase from Rebecca salina (Marine microalga).